The primary structure comprises 275 residues: Intercellular adhesion molecule 2 (275 aa).

The N-terminal stretch at 1–24 is a signal peptide; it reads MSSFSYRTLTVALFALICCPGSDE. The Extracellular segment spans residues 25 to 223; that stretch reads KVFEVHVRPK…EIYEPVSDSQ (199 aa). Residues 41-98 form the Ig-like C2-type 1 domain; that stretch reads KGSLKVNCSTTCNQPEVGGLETSLDKILLDEQAQWKHYLVSNISHDTVLQCHFTCSGK. N-linked (GlcNAc...) asparagine glycosylation is found at N47, N82, N105, N153, N176, and N187. Disulfide bonds link C48-C91 and C52-C95. Residues 127-197 enclose the Ig-like C2-type 2 domain; it reads GKSFTIECRV…FSCLAVLDLM (71 aa). C134 and C190 are oxidised to a cystine. Residues 224-248 traverse the membrane as a helical segment; sequence MVIIVTVVSVLLSLFVTSVLLCFIF. Over 249–275 the chain is Cytoplasmic; it reads GQHLRQQRMGTYGVRAAWRRLPQAFRP. Residues 251 to 275 are required for interaction with EZR, MSN and RDX and co-localization to microvilli; that stretch reads HLRQQRMGTYGVRAAWRRLPQAFRP.

This sequence belongs to the immunoglobulin superfamily. ICAM family. As to quaternary structure, interacts with RDX, EZR and MSN.

Its subcellular location is the membrane. The protein localises to the cell projection. It localises to the microvillus. Its function is as follows. ICAM proteins are ligands for the leukocyte adhesion protein LFA-1 (integrin alpha-L/beta-2). ICAM2 may play a role in lymphocyte recirculation by blocking LFA-1-dependent cell adhesion. It mediates adhesive interactions important for antigen-specific immune response, NK-cell mediated clearance, lymphocyte recirculation, and other cellular interactions important for immune response and surveillance. The chain is Intercellular adhesion molecule 2 (ICAM2) from Pan troglodytes (Chimpanzee).